The chain runs to 448 residues: Neurexin-1b-beta (448 aa).

An N-terminal signal peptide occupies residues Met-1–Ser-38. Residues Gly-39–Thr-375 lie on the Extracellular side of the membrane. The region spanning Ser-71–Val-269 is the Laminin G-like domain. The helical transmembrane segment at Gly-376–Met-396 threads the bilayer. The Cytoplasmic segment spans residues Tyr-397–Val-448. Positions Glu-426 to Ser-436 are enriched in basic and acidic residues. Positions Glu-426–Val-448 are disordered.

Belongs to the neurexin family.

It localises to the membrane. Neuronal cell surface protein that may be involved in cell recognition and cell adhesion. May play a role in formation or maintenance of synaptic junctions. The protein is Neurexin-1b-beta (nrxn1b) of Danio rerio (Zebrafish).